We begin with the raw amino-acid sequence, 185 residues long: Probable nicotinate-nucleotide adenylyltransferase (185 aa).

This sequence belongs to the NadD family.

It catalyses the reaction nicotinate beta-D-ribonucleotide + ATP + H(+) = deamido-NAD(+) + diphosphate. It participates in cofactor biosynthesis; NAD(+) biosynthesis; deamido-NAD(+) from nicotinate D-ribonucleotide: step 1/1. Functionally, catalyzes the reversible adenylation of nicotinate mononucleotide (NaMN) to nicotinic acid adenine dinucleotide (NaAD). In Methylorubrum extorquens (strain CM4 / NCIMB 13688) (Methylobacterium extorquens), this protein is Probable nicotinate-nucleotide adenylyltransferase.